A 305-amino-acid chain; its full sequence is Cytochrome c biogenesis protein CcsA (305 aa).

8 helical membrane-spanning segments follow: residues 11–31 (ANAS…KAIF), 36–56 (ILQL…ALLL), 75–95 (LMFL…YIQI), 97–117 (FIGF…TFFL), 142–162 (IMMA…AFLF), 212–232 (TIGI…VWAN), 239–259 (WSWD…AIYL), and 273–293 (AIVA…VNLL).

The protein belongs to the CcmF/CycK/Ccl1/NrfE/CcsA family. May interact with Ccs1.

Its subcellular location is the plastid. It is found in the chloroplast thylakoid membrane. Required during biogenesis of c-type cytochromes (cytochrome c6 and cytochrome f) at the step of heme attachment. This Mesostigma viride (Green alga) protein is Cytochrome c biogenesis protein CcsA.